Reading from the N-terminus, the 505-residue chain is Putative heat shock protein HSP 90-beta 4 (505 aa).

The ATP site is built by Asn22, Lys83, and Phe109. Positions 197 to 248 (EKEISDDEEEKGEKEEEDKDDKEKPKTEDVGSDEEDDTDKNNKKKTKKIKEK) are disordered. The segment covering 200–216 (ISDDEEEKGEKEEEDKD) has biased composition (acidic residues).

The protein belongs to the heat shock protein 90 family. Homodimer.

The protein resides in the cytoplasm. Putative molecular chaperone that may promote the maturation, structural maintenance and proper regulation of specific target proteins. The protein is Putative heat shock protein HSP 90-beta 4 (HSP90AB4P) of Homo sapiens (Human).